A 669-amino-acid chain; its full sequence is Glutaminase kidney isoform, mitochondrial (669 aa).

A mitochondrion-targeting transit peptide spans 1 to 54; that stretch reads MMRLRGSGMLRDLLLRSPAGVSATLRRAQPLVTLCRRPRGGGRPAAGPAAAARL. A disordered region spans residues 68-118; that stretch reads LARGLSSSPSEILQELGKGSTHPQPGVSPPAAPAAPGPKDGPGETDAFGNS. Over residues 93-103 the composition is skewed to pro residues; the sequence is GVSPPAAPAAP. N6-succinyllysine is present on residues Lys130 and Lys164. Position 286 (Ser286) interacts with substrate. Lys311 is modified (N6-acetyllysine). The highly mobile activation loop stretch occupies residues 315 to 322; the sequence is GLRFNKLF. The substrate site is built by Asn335, Glu381, Asn388, Tyr414, Tyr466, and Val484. ANK repeat units lie at residues 585-614 and 619-648; these read DSRT…VNPF and WNNT…QYTP. The segment at 647 to 669 is disordered; sequence TPQGDSDNGKENQTVHKNLDGLL. A Phosphoserine modification is found at Ser652. Residues 653-669 are compositionally biased toward basic and acidic residues; that stretch reads DNGKENQTVHKNLDGLL.

Belongs to the glutaminase family. Homotetramer, dimer of dimers. The tetramers can assemble into rod-like oligomers (in vitro), but the physiological significance of this is not clear. Interacts with RAF1 and MAP2K2. Interacts with ATCAY; the interaction is direct and may control GLS localization, negatively regulating its activity. In terms of processing, synthesized as a 74-kDa cytosolic precursor which is proteolytically processed by the mitochondrial-processing peptidase (MPP) via a 72-kDa intermediate to yield the mature mitochondrial 68- and 65-kDa subunits. Isoform 1 and isoform 3 are detected in brain cortex. Isoform 3 is highly expressed in astrocytoma, ganglioglioma and ependymoma. Isoform 1 is highly expressed in brain and kidney, but not detected in liver. Isoform 3 is highly expressed in heart and pancreas, detected at lower levels in placenta, lung, pancreas and kidney, but is not detected in liver. Isoform 2 is expressed in cardiac and skeletal muscle.

It is found in the mitochondrion. The protein resides in the cytoplasm. It localises to the cytosol. Its subcellular location is the mitochondrion matrix. The enzyme catalyses L-glutamine + H2O = L-glutamate + NH4(+). Its activity is regulated as follows. Isoform 1 and isoform 3 are activated by phosphate. Inhibited by BPTES. BPTES binds between subunits and favors dissociation of the tetramer into dimers. Inhibited by 6-diazo-5-oxo-L-norleucine (DON). Enzyme activity is stimulated by phosphorylation. In terms of biological role, catalyzes the first reaction in the primary pathway for the renal catabolism of glutamine. Plays a role in maintaining acid-base homeostasis. Regulates the levels of the neurotransmitter glutamate, the main excitatory neurotransmitter in the brain. Functionally, lacks catalytic activity. The chain is Glutaminase kidney isoform, mitochondrial (GLS) from Homo sapiens (Human).